The primary structure comprises 150 residues: Snaclec rhinocetin subunit beta (150 aa).

A signal peptide spans 1–23 (MGRFIFLSSGLLVVFLSLSGTGA). Disulfide bonds link Cys-27-Cys-38, Cys-55-Cys-144, and Cys-121-Cys-136. The C-type lectin domain maps to 34-145 (YEGYCYKVFK…CNRQQYFVCK (112 aa)).

Belongs to the snaclec family. As to quaternary structure, heterodimer; disulfide-linked. As to expression, expressed by the venom gland.

Its subcellular location is the secreted. Functionally, antagonist of the alpha-2 subunit of the integrin alpha-2/beta-1 (ITGA2/ITGB1) on human platelets and endothelial cells. This protein inhibits collagen-stimulated activation of human platelets in a dose-dependent manner. In addition, it antagonizes the binding of monoclonal antibodies against the alpha-2 subunit of integrin alpha-2/beta-1 to platelets and it coimmunoprecipitates with this integrin. The sequence is that of Snaclec rhinocetin subunit beta from Bitis rhinoceros (West African gaboon viper).